The following is a 251-amino-acid chain: 16S rRNA (guanine(1405)-N(7))-methyltransferase (251 aa).

Residues Y56, 81-83 (HAS), R87, A111, D131, 157-158 (DV), F173, and E182 contribute to the S-adenosyl-L-methionine site.

This sequence belongs to the methyltransferase superfamily. Aminoglycoside resistance family.

It carries out the reaction guanosine(1405) in 16S rRNA + S-adenosyl-L-methionine = N(7)-methylguanosine(1405) in 16S rRNA + S-adenosyl-L-homocysteine. Its function is as follows. Specifically methylates the N(7) position of guanine 1405 in 16S rRNA. Confers resistance to various aminoglycosides, including kanamycin, tobramycin, amikacin, arbekacin, gentamicin, sisomicin and isepamicin. In Serratia marcescens, this protein is 16S rRNA (guanine(1405)-N(7))-methyltransferase (rmtB).